The sequence spans 373 residues: GDSL esterase/lipase LIP-4 (373 aa).

An N-terminal signal peptide occupies residues 1–32; the sequence is MATLFLYSNTFSFFFITLVSLALLILRQPSRA. The active-site Nucleophile is Ser47. Asn93 carries an N-linked (GlcNAc...) asparagine glycan. Active-site residues include Asp339 and His342.

The protein belongs to the 'GDSL' lipolytic enzyme family.

It localises to the secreted. This is GDSL esterase/lipase LIP-4 (LIP4) from Arabidopsis thaliana (Mouse-ear cress).